Here is a 273-residue protein sequence, read N- to C-terminus: Translation initiation factor IF-3, mitochondrial (273 aa).

A mitochondrion-targeting transit peptide spans 1 to 32; that stretch reads MAALFLKKLTLQTVKTENYCIRRCLGKYILQG. The propeptide at 33 to 92 is removed in mature form; that stretch reads PAPTQQPPRPSCLIHAKAFSTEDTQDEMTKKKKNETAFSSVGRKINERIIHVLDEQGNDL. Positions 242–273 are disordered; the sequence is EEAAWKAAPDTPRRDALNGGDGKDGASGVLPQ. Over residues 252–265 the composition is skewed to basic and acidic residues; it reads TPRRDALNGGDGKD.

The protein belongs to the IF-3 family.

It is found in the mitochondrion. In terms of biological role, IF-3 binds to the 28S ribosomal subunit and shifts the equilibrium between 55S ribosomes and their 39S and 28S subunits in favor of the free subunits, thus enhancing the availability of 28S subunits on which protein synthesis initiation begins. The protein is Translation initiation factor IF-3, mitochondrial (MTIF3) of Bos taurus (Bovine).